A 122-amino-acid polypeptide reads, in one-letter code: Large ribosomal subunit protein uL14 (122 aa).

This sequence belongs to the universal ribosomal protein uL14 family. In terms of assembly, part of the 50S ribosomal subunit. Forms a cluster with proteins L3 and L19. In the 70S ribosome, L14 and L19 interact and together make contacts with the 16S rRNA in bridges B5 and B8.

In terms of biological role, binds to 23S rRNA. Forms part of two intersubunit bridges in the 70S ribosome. The polypeptide is Large ribosomal subunit protein uL14 (Clostridium kluyveri (strain ATCC 8527 / DSM 555 / NBRC 12016 / NCIMB 10680 / K1)).